A 165-amino-acid polypeptide reads, in one-letter code: MSSRRNDYHYDGNDHQYRSPLKSNVDQNSFYESSYRSRQSYHQRTKTPRSSYDSPSSSTNSKEHNSPYHYRVPSNNSTRASFGAASTDTNVELPKINLPDSSLSSKLQSCKSACENSSQSLLNVEQQYAQQVHFWEKIRTDIYREGLRSDAAVKSLNDFVNNVSF.

Basic and acidic residues predominate over residues 1 to 17; sequence MSSRRNDYHYDGNDHQY. The segment at 1 to 86 is disordered; the sequence is MSSRRNDYHY…STRASFGAAS (86 aa). Low complexity-rich tracts occupy residues 29–38 and 50–60; these read SFYESSYRSR and SSYDSPSSSTN. Polar residues predominate over residues 73–86; the sequence is PSNNSTRASFGAAS.

As to quaternary structure, component of the histone H2B ubiquitin ligase complex (HULC) composed of at least brl1, brl2, rhp6 and shf1.

The protein resides in the nucleus. Its subcellular location is the cytoplasm. The protein localises to the cytoskeleton. It is found in the microtubule organizing center. It localises to the spindle pole body. Its function is as follows. Component of the histone H2B ubiquitin ligase complex (HULC) which plays a role in transcription regulation by catalyzing the monoubiquitination of histone H2B to form H2BK123ub1. H2BK123ub1 gives a specific tag for epigenetic transcriptional activation and is also a prerequisite for H3K4me and H3K79me formation. The chain is Small histone ubiquitination factor 1 (shf1) from Schizosaccharomyces pombe (strain 972 / ATCC 24843) (Fission yeast).